Consider the following 372-residue polypeptide: Homoserine dehydrogenase (372 aa).

V13, G15, V16, and T99 together coordinate NAD(+). Residues V16 and T99 each contribute to the NADP(+) site. NADPH contacts are provided by V16, T99, S100, and K123. K123 is a binding site for NADP(+). E150, V153, A155, and L157 together coordinate Na(+). NADP(+) contacts are provided by G216 and E219. L-homoserine-binding residues include E219 and D230. Catalysis depends on K234, which acts as the Proton donor. G352 serves as a coordination point for NAD(+). G352 is an NADP(+) binding site. An NADPH-binding site is contributed by G352.

The protein belongs to the homoserine dehydrogenase family. Homodimer. A metal cation serves as cofactor.

The catalysed reaction is L-homoserine + NADP(+) = L-aspartate 4-semialdehyde + NADPH + H(+). It carries out the reaction L-homoserine + NAD(+) = L-aspartate 4-semialdehyde + NADH + H(+). It functions in the pathway amino-acid biosynthesis; L-methionine biosynthesis via de novo pathway; L-homoserine from L-aspartate: step 3/3. The protein operates within amino-acid biosynthesis; L-threonine biosynthesis; L-threonine from L-aspartate: step 3/5. Catalyzes the conversion of L-aspartate-beta-semialdehyde (L-Asa) to L-homoserine (L-Hse), the third step in the biosynthesis of amino acids that derive from aspartate (the aspartate family of amino acids), including methioinine and threonine, the latter of which is a precursor to isoleucine; production of homoserine leads to a branch-point in the pathway as it can either be O-phosphorylated for processing to threonine, or O-acylated for processing to methionine. The polypeptide is Homoserine dehydrogenase (Paracoccidioides brasiliensis (strain Pb18)).